The primary structure comprises 576 residues: Deformed epidermal autoregulatory factor 1 (576 aa).

Disordered stretches follow at residues 52–76 (VTSS…GGGN), 189–215 (AGGA…NPST), and 309–362 (ESAS…SGSG). Composition is skewed to gly residues over residues 61-76 (GSGG…GGGN) and 191-207 (GASG…GGSS). One can recognise an SAND domain in the interval 210–291 (SENPSTQHNE…QSLIDEGTLT (82 aa)). The Nuclear localization signal signature appears at 324–340 (RKRNQTDLDMESGPKRK). The span at 345-362 (HSNNNNSNTNNNNTSGSG) shows a compositional bias: low complexity. The Zn(2+) site is built by cysteine 521, cysteine 524, cysteine 532, cysteine 535, cysteine 541, cysteine 545, histidine 553, and cysteine 557. The MYND-type zinc finger occupies 521–557 (CANCNREALAECSLCRKTPYCSEFCQRKDWNAHQVEC).

The protein localises to the nucleus. In terms of biological role, transcription factor that binds the homeotic Deformed (Dfd) response element. High affinity binding sites contain at least 1 TTCG motif surrounded by additional TCG sequences. May be involved in the selective action of Dfd on these sites without binding directly to the Dfd protein. Requirement of DEAF1 activity may be a common feature of enhancers targeted by Dfd. The chain is Deformed epidermal autoregulatory factor 1 (Deaf1) from Drosophila melanogaster (Fruit fly).